A 360-amino-acid polypeptide reads, in one-letter code: Peptide chain release factor 1 (360 aa).

Q236 is subject to N5-methylglutamine. Positions 288–308 (QDEQDAERKSTIGTGDRSERI) are disordered. Residues 293 to 308 (AERKSTIGTGDRSERI) show a composition bias toward basic and acidic residues.

It belongs to the prokaryotic/mitochondrial release factor family. In terms of processing, methylated by PrmC. Methylation increases the termination efficiency of RF1.

It localises to the cytoplasm. In terms of biological role, peptide chain release factor 1 directs the termination of translation in response to the peptide chain termination codons UAG and UAA. This is Peptide chain release factor 1 from Streptococcus equi subsp. equi (strain 4047).